The following is a 290-amino-acid chain: Uridine diphosphate glucose pyrophosphatase NUDT22 (290 aa).

Residues Phe-56, Tyr-87, Arg-139, Ala-144, Asp-151, His-156, and Glu-158 each contribute to the substrate site. The Nudix hydrolase domain maps to 118-285 (ADPLGVGAAL…KGAIFLYNRV (168 aa)). The Nudix box signature appears at 175 to 196 (GELVVHELFSSVLQEICDEVNV). Residues Glu-189 and Glu-193 each coordinate Mg(2+). Ser-274 is a binding site for substrate.

This sequence belongs to the Nudix family. The cofactor is Mg(2+).

It catalyses the reaction UDP-sugar + H2O = UMP + alpha-D-aldose 1-phosphate.. Its function is as follows. Hydrolyzes UDP-glucose to glucose 1-phosphate and UMP and UDP-galactose to galactose 1-phosphate and UMP. Preferred substrate is UDP-glucose. The protein is Uridine diphosphate glucose pyrophosphatase NUDT22 (NUDT22) of Bos taurus (Bovine).